The following is a 164-amino-acid chain: Transcriptional regulator MraZ (164 aa).

2 SpoVT-AbrB domains span residues 7-63 (REQH…EPAV) and 92-135 (LDQL…NPDR).

Belongs to the MraZ family. In terms of assembly, forms oligomers.

Its subcellular location is the cytoplasm. It localises to the nucleoid. The sequence is that of Transcriptional regulator MraZ from Chlorobaculum parvum (strain DSM 263 / NCIMB 8327) (Chlorobium vibrioforme subsp. thiosulfatophilum).